The primary structure comprises 800 residues: N,N'-diacetylchitobiose phosphorylase (800 aa).

N-acetyl-alpha-D-glucosamine 1-phosphate-binding residues include Arg-333, Arg-343, Arg-349, Asp-350, Trp-490, and Asp-492. Asp-492 (proton donor) is an active-site residue. 3 residues coordinate N-acetyl-D-glucosamine: Asp-492, Lys-636, and Glu-637. The N-acetyl-alpha-D-glucosamine 1-phosphate site is built by Glu-637, His-644, Gln-690, Thr-709, and Gly-710.

The protein belongs to the glycosyl hydrolase 94 family. In terms of assembly, homodimer.

The catalysed reaction is N,N'-diacetylchitobiose + phosphate = N-acetyl-alpha-D-glucosamine 1-phosphate + N-acetyl-D-glucosamine. In terms of biological role, catalyzes the reversible phosphorolysis of chitobiose (N,N'-diacetylchitobiose or (GlcNAc)(2)) into N-acetyl-alpha-D-glucosamine 1-phosphate (GlcNAc-1-P) and N-acetyl-D-glucosamine (GlcNAc) with inversion of the anomeric configuration. This Vibrio furnissii protein is N,N'-diacetylchitobiose phosphorylase.